Consider the following 429-residue polypeptide: Histidinol dehydrogenase (429 aa).

Tyrosine 130, glutamine 191, and asparagine 214 together coordinate NAD(+). The substrate site is built by serine 237, glutamine 259, and histidine 262. Glutamine 259 and histidine 262 together coordinate Zn(2+). Catalysis depends on proton acceptor residues glutamate 327 and histidine 328. Residues histidine 328, aspartate 361, glutamate 415, and histidine 420 each contribute to the substrate site. Aspartate 361 lines the Zn(2+) pocket. Residue histidine 420 participates in Zn(2+) binding.

This sequence belongs to the histidinol dehydrogenase family. Zn(2+) is required as a cofactor.

It carries out the reaction L-histidinol + 2 NAD(+) + H2O = L-histidine + 2 NADH + 3 H(+). It functions in the pathway amino-acid biosynthesis; L-histidine biosynthesis; L-histidine from 5-phospho-alpha-D-ribose 1-diphosphate: step 9/9. In terms of biological role, catalyzes the sequential NAD-dependent oxidations of L-histidinol to L-histidinaldehyde and then to L-histidine. This chain is Histidinol dehydrogenase, found in Geobacter sulfurreducens (strain ATCC 51573 / DSM 12127 / PCA).